Consider the following 277-residue polypeptide: Putative hydroxypyruvate isomerase (277 aa).

Active-site proton donor/acceptor residues include Glu150 and Glu249.

It belongs to the hyi family.

The catalysed reaction is 3-hydroxypyruvate = 2-hydroxy-3-oxopropanoate. Catalyzes the reversible isomerization between hydroxypyruvate and 2-hydroxy-3-oxopropanoate (also termed tartronate semialdehyde). The chain is Putative hydroxypyruvate isomerase (Hyi) from Mus musculus (Mouse).